Reading from the N-terminus, the 272-residue chain is Putative imidazole glycerol phosphate synthase subunit hisF2 (272 aa).

The active site involves aspartate 133.

Belongs to the HisA/HisF family. Heterodimer of HisH and HisF.

The protein resides in the cytoplasm. The enzyme catalyses 5-[(5-phospho-1-deoxy-D-ribulos-1-ylimino)methylamino]-1-(5-phospho-beta-D-ribosyl)imidazole-4-carboxamide + L-glutamine = D-erythro-1-(imidazol-4-yl)glycerol 3-phosphate + 5-amino-1-(5-phospho-beta-D-ribosyl)imidazole-4-carboxamide + L-glutamate + H(+). It participates in amino-acid biosynthesis; L-histidine biosynthesis; L-histidine from 5-phospho-alpha-D-ribose 1-diphosphate: step 5/9. In terms of biological role, IGPS catalyzes the conversion of PRFAR and glutamine to IGP, AICAR and glutamate. The HisF subunit catalyzes the cyclization activity that produces IGP and AICAR from PRFAR using the ammonia provided by the HisH subunit. This chain is Putative imidazole glycerol phosphate synthase subunit hisF2 (hisF2), found in Vibrio vulnificus (strain YJ016).